The primary structure comprises 104 residues: U20-lycotoxin-Ls1a (104 aa).

A signal peptide spans 1–30 (MFSTSDQVSKMNSRILSALLILGIATCVIA). Residues 31–76 (GGFCPKSRHPQCNLSYKINDCCAQSDCRVGSVCCVEGCGNVCRAES) enclose the WAP domain. 5 disulfides stabilise this stretch: Cys-34-Cys-64, Cys-42-Cys-68, Cys-51-Cys-63, Cys-52-Cys-90, and Cys-57-Cys-72.

Belongs to the venom protein 11 family. 02 (wap-2) subfamily. In terms of processing, contains 5 disulfide bonds. Expressed by the venom gland.

It is found in the secreted. Has antibacterial activity. This chain is U20-lycotoxin-Ls1a, found in Lycosa singoriensis (Wolf spider).